The following is a 206-amino-acid chain: Isopentenyl-diphosphate Delta-isomerase (206 aa).

H44 and H51 together coordinate Mn(2+). The Nudix hydrolase domain occupies 49 to 183 (ALHLAFSCHV…PWAFSPWLVL (135 aa)). C86 is a catalytic residue. C86 contacts Mg(2+). H88 is a Mn(2+) binding site. E106 lines the Mg(2+) pocket. Mn(2+)-binding residues include E133 and E135. E135 is an active-site residue.

It belongs to the IPP isomerase type 1 family. Mg(2+) serves as cofactor. The cofactor is Mn(2+).

The protein resides in the cytoplasm. It catalyses the reaction isopentenyl diphosphate = dimethylallyl diphosphate. Its pathway is isoprenoid biosynthesis; dimethylallyl diphosphate biosynthesis; dimethylallyl diphosphate from isopentenyl diphosphate: step 1/1. Functionally, catalyzes the 1,3-allylic rearrangement of the homoallylic substrate isopentenyl (IPP) to its highly electrophilic allylic isomer, dimethylallyl diphosphate (DMAPP). The sequence is that of Isopentenyl-diphosphate Delta-isomerase from Agromyces mediolanus (Corynebacterium mediolanum).